An 887-amino-acid chain; its full sequence is Lon protease homolog 2, peroxisomal (887 aa).

Residues 11–256 enclose the Lon N-terminal domain; sequence LGILAFRNKV…KATELVDRHL (246 aa). The disordered stretch occupies residues 72–101; sequence YPGGGTDSGERNVKSQPGLSDSRKADGKSQ. ATP is bound at residue 409 to 416; the sequence is GPPGVGKT. Residues 693–878 enclose the Lon proteolytic domain; sequence VSNPGVSVGL…EVLEQAFEGG (186 aa). Active-site residues include serine 784 and lysine 827. A Microbody targeting signal motif is present at residues 885 to 887; the sequence is ARL.

Belongs to the peptidase S16 family.

It is found in the peroxisome matrix. It catalyses the reaction Hydrolysis of proteins in presence of ATP.. ATP-dependent serine protease that mediates the selective degradation of misfolded and unassembled polypeptides in the peroxisomal matrix. Necessary for type 2 peroxisome targeting signal (PTS2)-containing protein processing and facilitates peroxisome matrix protein import. The polypeptide is Lon protease homolog 2, peroxisomal (Spinacia oleracea (Spinach)).